Consider the following 71-residue polypeptide: Pro-MCH (71 aa).

A signal peptide spans A1 to G20.

Belongs to the melanin-concentrating hormone family.

The protein resides in the secreted. The chain is Pro-MCH (PMCH) from Pan paniscus (Pygmy chimpanzee).